The sequence spans 125 residues: Small ribosomal subunit protein uS13 (125 aa).

The disordered stretch occupies residues 93–125 (RSLPVRGQRTRTNARTRKGKRKTVAGKKKAGKK).

This sequence belongs to the universal ribosomal protein uS13 family. Part of the 30S ribosomal subunit. Forms a loose heterodimer with protein S19. Forms two bridges to the 50S subunit in the 70S ribosome.

Its function is as follows. Located at the top of the head of the 30S subunit, it contacts several helices of the 16S rRNA. In the 70S ribosome it contacts the 23S rRNA (bridge B1a) and protein L5 of the 50S subunit (bridge B1b), connecting the 2 subunits; these bridges are implicated in subunit movement. Contacts the tRNAs in the A and P-sites. This chain is Small ribosomal subunit protein uS13, found in Chlorobaculum tepidum (strain ATCC 49652 / DSM 12025 / NBRC 103806 / TLS) (Chlorobium tepidum).